The primary structure comprises 155 residues: 6,7-dimethyl-8-ribityllumazine synthase (155 aa).

5-amino-6-(D-ribitylamino)uracil-binding positions include F22, A56–E58, and A80–I82. Residue S85–T86 coordinates (2S)-2-hydroxy-3-oxobutyl phosphate. The active-site Proton donor is the H88. F113 contacts 5-amino-6-(D-ribitylamino)uracil. A (2S)-2-hydroxy-3-oxobutyl phosphate-binding site is contributed by R127.

Belongs to the DMRL synthase family.

The enzyme catalyses (2S)-2-hydroxy-3-oxobutyl phosphate + 5-amino-6-(D-ribitylamino)uracil = 6,7-dimethyl-8-(1-D-ribityl)lumazine + phosphate + 2 H2O + H(+). Its pathway is cofactor biosynthesis; riboflavin biosynthesis; riboflavin from 2-hydroxy-3-oxobutyl phosphate and 5-amino-6-(D-ribitylamino)uracil: step 1/2. Catalyzes the formation of 6,7-dimethyl-8-ribityllumazine by condensation of 5-amino-6-(D-ribitylamino)uracil with 3,4-dihydroxy-2-butanone 4-phosphate. This is the penultimate step in the biosynthesis of riboflavin. The sequence is that of 6,7-dimethyl-8-ribityllumazine synthase from Caldicellulosiruptor bescii (strain ATCC BAA-1888 / DSM 6725 / KCTC 15123 / Z-1320) (Anaerocellum thermophilum).